Consider the following 234-residue polypeptide: 1-(5-phosphoribosyl)-5-[(5-phosphoribosylamino)methylideneamino] imidazole-4-carboxamide isomerase (234 aa).

Catalysis depends on Asp9, which acts as the Proton acceptor. Asp131 serves as the catalytic Proton donor.

It belongs to the HisA/HisF family.

It localises to the cytoplasm. It carries out the reaction 1-(5-phospho-beta-D-ribosyl)-5-[(5-phospho-beta-D-ribosylamino)methylideneamino]imidazole-4-carboxamide = 5-[(5-phospho-1-deoxy-D-ribulos-1-ylimino)methylamino]-1-(5-phospho-beta-D-ribosyl)imidazole-4-carboxamide. It participates in amino-acid biosynthesis; L-histidine biosynthesis; L-histidine from 5-phospho-alpha-D-ribose 1-diphosphate: step 4/9. This Staphylococcus aureus (strain bovine RF122 / ET3-1) protein is 1-(5-phosphoribosyl)-5-[(5-phosphoribosylamino)methylideneamino] imidazole-4-carboxamide isomerase.